The sequence spans 521 residues: FAD-dependent monooxygenase DEP2 (521 aa).

The signal sequence occupies residues Met1 to Ala22. 2 residues coordinate FAD: Asp36 and Arg109. Residues Asn139 and Asn220 are each glycosylated (N-linked (GlcNAc...) asparagine). FAD-binding residues include Asp310 and Gly323. A helical membrane pass occupies residues Ile477–Gly497. A glycan (N-linked (GlcNAc...) asparagine) is linked at Asn515.

The protein belongs to the paxM FAD-dependent monooxygenase family. It depends on FAD as a cofactor.

It is found in the membrane. It participates in polyketide biosynthesis. In terms of biological role, part of the gene cluster that mediates the biosynthesis of depudecin, a highly oxidized eleven-carbon linear polyketide that acts as a histone deacetylase (HDAC) inhibitor and makes a small contribution to pathogenesis. The reducing polyketide synthase DEP5 is the central enzyme in depudecin biosynthesis by yielding the backbone polyketide chain. The monooxygenases DEP2 and DEP4, as well as the uncharacterized protein DEP1, then act as tailoring enzymes to modify the intermediate polyketide chain into depudecin. This chain is FAD-dependent monooxygenase DEP2, found in Fusarium langsethiae.